The primary structure comprises 737 residues: NAD(P)H-quinone oxidoreductase subunit 5, chloroplastic (737 aa).

The next 16 helical transmembrane spans lie at 9 to 29, 40 to 60, 89 to 109, 125 to 145, 147 to 167, 185 to 205, 219 to 239, 258 to 278, 286 to 306, 327 to 347, 354 to 374, 396 to 416, 425 to 445, 543 to 563, 602 to 622, and 717 to 737; these read WIIP…LILF, WAFQ…YLSI, IDPL…MVLI, FAYM…SNLI, IYIF…FWFT, GDFG…SFEF, NELN…GAVA, TPIS…FLVA, VIPY…LLGA, LGYM…FHLI, ALLF…VGYS, ITFL…CFWS, WLYS…TAFY, LFPI…GIPF, VVSV…YKPI, and SYLF…YLLF.

The protein belongs to the complex I subunit 5 family. As to quaternary structure, NDH is composed of at least 16 different subunits, 5 of which are encoded in the nucleus.

It is found in the plastid. Its subcellular location is the chloroplast thylakoid membrane. It catalyses the reaction a plastoquinone + NADH + (n+1) H(+)(in) = a plastoquinol + NAD(+) + n H(+)(out). It carries out the reaction a plastoquinone + NADPH + (n+1) H(+)(in) = a plastoquinol + NADP(+) + n H(+)(out). In terms of biological role, NDH shuttles electrons from NAD(P)H:plastoquinone, via FMN and iron-sulfur (Fe-S) centers, to quinones in the photosynthetic chain and possibly in a chloroplast respiratory chain. The immediate electron acceptor for the enzyme in this species is believed to be plastoquinone. Couples the redox reaction to proton translocation, and thus conserves the redox energy in a proton gradient. This Solanum lycopersicum (Tomato) protein is NAD(P)H-quinone oxidoreductase subunit 5, chloroplastic (ndhF).